The sequence spans 611 residues: Dihydroxy-acid dehydratase (611 aa).

A Mg(2+)-binding site is contributed by Asp81. Cys122 provides a ligand contact to [2Fe-2S] cluster. Mg(2+) contacts are provided by Asp123 and Lys124. Lys124 carries the post-translational modification N6-carboxylysine. Residue Cys195 participates in [2Fe-2S] cluster binding. Glu491 is a binding site for Mg(2+). Residue Ser517 is the Proton acceptor of the active site.

It belongs to the IlvD/Edd family. In terms of assembly, homodimer. Requires [2Fe-2S] cluster as cofactor. The cofactor is Mg(2+).

It catalyses the reaction (2R)-2,3-dihydroxy-3-methylbutanoate = 3-methyl-2-oxobutanoate + H2O. The catalysed reaction is (2R,3R)-2,3-dihydroxy-3-methylpentanoate = (S)-3-methyl-2-oxopentanoate + H2O. It participates in amino-acid biosynthesis; L-isoleucine biosynthesis; L-isoleucine from 2-oxobutanoate: step 3/4. Its pathway is amino-acid biosynthesis; L-valine biosynthesis; L-valine from pyruvate: step 3/4. In terms of biological role, functions in the biosynthesis of branched-chain amino acids. Catalyzes the dehydration of (2R,3R)-2,3-dihydroxy-3-methylpentanoate (2,3-dihydroxy-3-methylvalerate) into 2-oxo-3-methylpentanoate (2-oxo-3-methylvalerate) and of (2R)-2,3-dihydroxy-3-methylbutanoate (2,3-dihydroxyisovalerate) into 2-oxo-3-methylbutanoate (2-oxoisovalerate), the penultimate precursor to L-isoleucine and L-valine, respectively. In Actinobacillus pleuropneumoniae serotype 5b (strain L20), this protein is Dihydroxy-acid dehydratase.